Consider the following 425-residue polypeptide: tRNA(Ile)-lysidine synthase (425 aa).

27–32 contacts ATP; the sequence is SGGLDS.

Belongs to the tRNA(Ile)-lysidine synthase family.

It localises to the cytoplasm. The catalysed reaction is cytidine(34) in tRNA(Ile2) + L-lysine + ATP = lysidine(34) in tRNA(Ile2) + AMP + diphosphate + H(+). In terms of biological role, ligates lysine onto the cytidine present at position 34 of the AUA codon-specific tRNA(Ile) that contains the anticodon CAU, in an ATP-dependent manner. Cytidine is converted to lysidine, thus changing the amino acid specificity of the tRNA from methionine to isoleucine. The chain is tRNA(Ile)-lysidine synthase from Streptococcus pneumoniae (strain Taiwan19F-14).